Consider the following 122-residue polypeptide: Large ribosomal subunit protein uL14 (122 aa).

It belongs to the universal ribosomal protein uL14 family. As to quaternary structure, part of the 50S ribosomal subunit. Forms a cluster with proteins L3 and L19. In the 70S ribosome, L14 and L19 interact and together make contacts with the 16S rRNA in bridges B5 and B8.

Its function is as follows. Binds to 23S rRNA. Forms part of two intersubunit bridges in the 70S ribosome. This Mesomycoplasma hyopneumoniae (strain 232) (Mycoplasma hyopneumoniae) protein is Large ribosomal subunit protein uL14.